Consider the following 65-residue polypeptide: Toxin VmKTx1 (65 aa).

A signal peptide spans 1–21 (MKTSCLLTILLLSFLVAVAVA). A propeptide spanning residues 22–28 (EGERSAR) is cleaved from the precursor. Disulfide bonds link Cys34–Cys54, Cys40–Cys59, Cys44–Cys61, and Cys49–Cys64. A Cysteine amide modification is found at Cys64.

It belongs to the short scorpion toxin superfamily. Potassium channel inhibitor family. Alpha-KTx 23 subfamily. In terms of tissue distribution, expressed by the venom gland.

The protein resides in the secreted. In terms of biological role, voltage-gated potassium channel inhibitor. Selectively and reversibly binds (Kd=0.77 nM) and blocks hKv1.3/KCNA3 potassium channels of human T-lymphocytes. Also shows a very weak effect on hKv1.2/KCNA2 (Kd=7.1 uM). Also reduces the fraction of CD40L expressing T cells that are stimulated by alphaCD3/alphaCD28. This chain is Toxin VmKTx1, found in Vaejovis mexicanus smithi (Mexican scorpion).